The primary structure comprises 300 residues: 33 kDa chaperonin (300 aa).

2 cysteine pairs are disulfide-bonded: Cys240–Cys242 and Cys273–Cys276.

The protein belongs to the HSP33 family. In terms of processing, under oxidizing conditions two disulfide bonds are formed involving the reactive cysteines. Under reducing conditions zinc is bound to the reactive cysteines and the protein is inactive.

The protein resides in the cytoplasm. Redox regulated molecular chaperone. Protects both thermally unfolding and oxidatively damaged proteins from irreversible aggregation. Plays an important role in the bacterial defense system toward oxidative stress. The chain is 33 kDa chaperonin from Cyanothece sp. (strain PCC 7425 / ATCC 29141).